We begin with the raw amino-acid sequence, 177 residues long: Large ribosomal subunit protein uL6 (177 aa).

Belongs to the universal ribosomal protein uL6 family. In terms of assembly, part of the 50S ribosomal subunit.

Its function is as follows. This protein binds to the 23S rRNA, and is important in its secondary structure. It is located near the subunit interface in the base of the L7/L12 stalk, and near the tRNA binding site of the peptidyltransferase center. This chain is Large ribosomal subunit protein uL6, found in Cupriavidus metallidurans (strain ATCC 43123 / DSM 2839 / NBRC 102507 / CH34) (Ralstonia metallidurans).